We begin with the raw amino-acid sequence, 201 residues long: UPF0056 membrane protein PH0760 (201 aa).

Helical transmembrane passes span 8 to 28, 49 to 69, 73 to 93, 111 to 131, 140 to 160, and 181 to 201; these read FMIL…VPVF, ITVF…FKFF, IDAF…EMLS, VAVI…TTVM, GIVI…LYSG, and LILT…AFGI.

This sequence belongs to the UPF0056 (MarC) family.

It is found in the cell membrane. This is UPF0056 membrane protein PH0760 from Pyrococcus horikoshii (strain ATCC 700860 / DSM 12428 / JCM 9974 / NBRC 100139 / OT-3).